The following is a 537-amino-acid chain: Intercellular adhesion molecule 1 (537 aa).

The signal sequence occupies residues Met-1–Ala-27. The Extracellular portion of the chain corresponds to Gln-28–Asn-485. Ig-like C2-type domains follow at residues Gly-41–Ala-102 and Gly-127–Arg-195. Asn-47 carries an N-linked (GlcNAc...) asparagine glycan. 3 disulfide bridges follow: Cys-48–Cys-91, Cys-52–Cys-95, and Cys-134–Cys-188. The short motif at Arg-151–Glu-153 is the Cell attachment site; atypical element. The Cell attachment site signature appears at Arg-179 to Asp-181. N-linked (GlcNAc...) asparagine glycans are attached at residues Asn-185, Asn-204, Asn-267, Asn-311, Asn-362, Asn-388, Asn-409, Asn-456, and Asn-469. One can recognise an Ig-like C2-type 3 domain in the interval Gly-232–Gln-299. A disulfide bond links Cys-239 and Cys-292. Residues Gly-327–Ala-381 enclose the Ig-like C2-type 4 domain. Residues Cys-334 and Cys-374 are joined by a disulfide bond. Cystine bridges form between Cys-406-Cys-422, Cys-422-Cys-461, and Cys-434-Cys-461. Residues Gly-415 to Gly-468 enclose the Ig-like C2-type 5 domain. The chain crosses the membrane as a helical span at residues Trp-486–Tyr-509. Over Asn-510–Pro-537 the chain is Cytoplasmic.

Belongs to the immunoglobulin superfamily. ICAM family. In terms of assembly, homodimer. Interacts with MUC1 and promotes cell aggregation in epithelial cells. Interacts with ARHGEF26/SGEF. Interacts (on T cell side) with CD81, CD247 and CD9 at immunological synapses between antigen-presenting cells and T cells. Post-translationally, monoubiquitinated, which is promoted by MARCH9 and leads to endocytosis. As to expression, expressed at low level on a subpopulation of lymphocytes, macrophages, and endothelial cells, but is strongly induced on these cells, and on fibroblasts and epithelial cells.

The protein resides in the membrane. In terms of biological role, ICAM proteins are ligands for the leukocyte adhesion protein LFA-1 (integrin alpha-L/beta-2). During leukocyte trans-endothelial migration, ICAM1 engagement promotes the assembly of endothelial apical cups through ARHGEF26/SGEF and RHOG activation. This Mus musculus (Mouse) protein is Intercellular adhesion molecule 1 (Icam1).